A 336-amino-acid polypeptide reads, in one-letter code: Phospho-N-acetylmuramoyl-pentapeptide-transferase (336 aa).

The next 10 helical transmembrane spans lie at 3 to 23 (LTLI…PYFI), 53 to 73 (GGTV…LFSI), 78 to 98 (SLAL…IGFL), 118 to 138 (LALQ…PSGI), 143 to 163 (VFGY…FWVV), 174 to 194 (GIDG…GVIA), 200 to 220 (FDVL…FCFN), 226 to 246 (VFMG…ISIA), 251 to 271 (WTLL…MLQV), and 316 to 336 (AFLW…LYVF).

The protein belongs to the glycosyltransferase 4 family. MraY subfamily. Mg(2+) serves as cofactor.

The protein localises to the cell membrane. It carries out the reaction UDP-N-acetyl-alpha-D-muramoyl-L-alanyl-gamma-D-glutamyl-L-lysyl-D-alanyl-D-alanine + di-trans,octa-cis-undecaprenyl phosphate = Mur2Ac(oyl-L-Ala-gamma-D-Glu-L-Lys-D-Ala-D-Ala)-di-trans,octa-cis-undecaprenyl diphosphate + UMP. It functions in the pathway cell wall biogenesis; peptidoglycan biosynthesis. Its function is as follows. Catalyzes the initial step of the lipid cycle reactions in the biosynthesis of the cell wall peptidoglycan: transfers peptidoglycan precursor phospho-MurNAc-pentapeptide from UDP-MurNAc-pentapeptide onto the lipid carrier undecaprenyl phosphate, yielding undecaprenyl-pyrophosphoryl-MurNAc-pentapeptide, known as lipid I. The sequence is that of Phospho-N-acetylmuramoyl-pentapeptide-transferase from Streptococcus pyogenes serotype M49 (strain NZ131).